A 369-amino-acid polypeptide reads, in one-letter code: Cell division protein FtsZ (369 aa).

Residues Gly27 to Asn31, Gly119 to Gly121, Glu150, and Asn189 each bind GTP.

It belongs to the FtsZ family. Homodimer. Polymerizes to form a dynamic ring structure in a strictly GTP-dependent manner. Interacts directly with several other division proteins.

Its subcellular location is the cytoplasm. In terms of biological role, essential cell division protein that forms a contractile ring structure (Z ring) at the future cell division site. The regulation of the ring assembly controls the timing and the location of cell division. One of the functions of the FtsZ ring is to recruit other cell division proteins to the septum to produce a new cell wall between the dividing cells. Binds GTP and shows GTPase activity. This Mycoplasma genitalium (strain ATCC 33530 / DSM 19775 / NCTC 10195 / G37) (Mycoplasmoides genitalium) protein is Cell division protein FtsZ.